A 209-amino-acid polypeptide reads, in one-letter code: Large ribosomal subunit protein uL4 (209 aa).

The disordered stretch occupies residues 46–71 (GTSSTKTRSEVRGSSKKPWKQKGTGR). A compositionally biased stretch (basic residues) spans 59–71 (SSKKPWKQKGTGR).

The protein belongs to the universal ribosomal protein uL4 family. As to quaternary structure, part of the 50S ribosomal subunit.

One of the primary rRNA binding proteins, this protein initially binds near the 5'-end of the 23S rRNA. It is important during the early stages of 50S assembly. It makes multiple contacts with different domains of the 23S rRNA in the assembled 50S subunit and ribosome. In terms of biological role, forms part of the polypeptide exit tunnel. This is Large ribosomal subunit protein uL4 from Borreliella afzelii (strain PKo) (Borrelia afzelii).